The sequence spans 612 residues: Baeyer-Villiger monooxygenase 4 (612 aa).

FAD is bound by residues Glu99, Thr107–Trp110, Asp119, Tyr125, and Ala169. Gln117 to Asp119 is a binding site for NADP(+). Residues Thr253–Gln259, Arg276–Thr277, and Lys393–Arg394 contribute to the NADP(+) site.

This sequence belongs to the FAD-binding monooxygenase family. It depends on FAD as a cofactor.

Its function is as follows. Catalyzes a Baeyer-Villiger oxidation reaction, i.e. the insertion of an oxygen atom into a carbon-carbon bond adjacent to a carbonyl, which converts ketones to esters or lactones using NADPH as an electron donor. Has a broad substrate scope and oxidizes different compounds including substituted and unsubstituted alicyclic, bicyclic-, aliphatic-ketones, ketones with an aromatic moiety, and sulfides. The highest activities are measured for 2- and 3-methylcyclohexanone, phenylacetone, bicyclo[3.2.0]hept-2-en-6-one and menthone. Cannot use NADH instead of NADPH. Is not active on benzaldehyde. The protein is Baeyer-Villiger monooxygenase 4 of Dietzia sp. (strain D5).